Here is a 138-residue protein sequence, read N- to C-terminus: NADH dehydrogenase [ubiquinone] 1 alpha subcomplex subunit N7BM (138 aa).

The protein belongs to the complex I NDUFA12 subunit family. In terms of assembly, complex I is composed of 42 different subunits.

The protein localises to the mitochondrion inner membrane. Functionally, accessory subunit of the mitochondrial membrane respiratory chain NADH dehydrogenase (Complex I), that is believed not to be involved in catalysis. Complex I functions in the transfer of electrons from NADH to the respiratory chain. The immediate electron acceptor for the enzyme is believed to be ubiquinone. The chain is NADH dehydrogenase [ubiquinone] 1 alpha subcomplex subunit N7BM from Yarrowia lipolytica (strain CLIB 122 / E 150) (Yeast).